The chain runs to 443 residues: Xaa-Pro dipeptidase (443 aa).

Mn(2+)-binding residues include D244, D255, H336, E381, and E420.

It belongs to the peptidase M24B family. Bacterial-type prolidase subfamily. Mn(2+) serves as cofactor.

It catalyses the reaction Xaa-L-Pro dipeptide + H2O = an L-alpha-amino acid + L-proline. Functionally, splits dipeptides with a prolyl residue in the C-terminal position. The polypeptide is Xaa-Pro dipeptidase (Stenotrophomonas maltophilia (strain R551-3)).